The sequence spans 187 residues: Probable nicotinate-nucleotide adenylyltransferase (187 aa).

The protein belongs to the NadD family.

The catalysed reaction is nicotinate beta-D-ribonucleotide + ATP + H(+) = deamido-NAD(+) + diphosphate. Its pathway is cofactor biosynthesis; NAD(+) biosynthesis; deamido-NAD(+) from nicotinate D-ribonucleotide: step 1/1. In terms of biological role, catalyzes the reversible adenylation of nicotinate mononucleotide (NaMN) to nicotinic acid adenine dinucleotide (NaAD). The protein is Probable nicotinate-nucleotide adenylyltransferase of Agrobacterium fabrum (strain C58 / ATCC 33970) (Agrobacterium tumefaciens (strain C58)).